The sequence spans 274 residues: Large ribosomal subunit protein uL2 (274 aa).

2 disordered regions span residues 34 to 54 and 224 to 261; these read LEKK…TRHI and VAMN…KTRA.

Belongs to the universal ribosomal protein uL2 family. As to quaternary structure, part of the 50S ribosomal subunit. Forms a bridge to the 30S subunit in the 70S ribosome.

Functionally, one of the primary rRNA binding proteins. Required for association of the 30S and 50S subunits to form the 70S ribosome, for tRNA binding and peptide bond formation. It has been suggested to have peptidyltransferase activity; this is somewhat controversial. Makes several contacts with the 16S rRNA in the 70S ribosome. The protein is Large ribosomal subunit protein uL2 of Ectopseudomonas mendocina (strain ymp) (Pseudomonas mendocina).